Here is a 284-residue protein sequence, read N- to C-terminus: Acetylglutamate kinase (284 aa).

Substrate contacts are provided by residues 66–67, Arg88, and Asn179; that span reads GG.

It belongs to the acetylglutamate kinase family. ArgB subfamily.

Its subcellular location is the cytoplasm. The catalysed reaction is N-acetyl-L-glutamate + ATP = N-acetyl-L-glutamyl 5-phosphate + ADP. The protein operates within amino-acid biosynthesis; L-arginine biosynthesis; N(2)-acetyl-L-ornithine from L-glutamate: step 2/4. Its function is as follows. Catalyzes the ATP-dependent phosphorylation of N-acetyl-L-glutamate. The protein is Acetylglutamate kinase of Actinobacillus pleuropneumoniae serotype 5b (strain L20).